The following is a 351-amino-acid chain: MISYSVKQLASLVGGIVEGEPEIEITGISDILDAKKGQITFLSNPRYEAAVEKTQASAIVVSKSYKSSSPITLIRVDSPSLAFSQIISLFSPQPFSYEPGIHPTALIGREVEIGKEVSIQPYAVIEDKVKIGDGCVIGAYVFIGRESIIGEKSFFYPHVTIRERSRIGKRVILHPGAVIGSDGFGYEQTNGRHEKIPQVGIVQIDDDVEIGANTTVDRGRFGKTWIQEGCKIDNLVQIAHNVIIGKNSIIAAQTGISGSTSLGEHVTLAGQVGIAGHIHIGDGATITAQSGVTKDVPPRAVLSGRHARPINLTHKLEVLYNKLPELWERLKKLEKKYDGDSPRPEADPYNS.

The active-site Proton acceptor is His240.

This sequence belongs to the transferase hexapeptide repeat family. LpxD subfamily. Homotrimer.

It carries out the reaction a UDP-3-O-[(3R)-3-hydroxyacyl]-alpha-D-glucosamine + a (3R)-hydroxyacyl-[ACP] = a UDP-2-N,3-O-bis[(3R)-3-hydroxyacyl]-alpha-D-glucosamine + holo-[ACP] + H(+). It functions in the pathway bacterial outer membrane biogenesis; LPS lipid A biosynthesis. In terms of biological role, catalyzes the N-acylation of UDP-3-O-acylglucosamine using 3-hydroxyacyl-ACP as the acyl donor. Is involved in the biosynthesis of lipid A, a phosphorylated glycolipid that anchors the lipopolysaccharide to the outer membrane of the cell. The sequence is that of UDP-3-O-acylglucosamine N-acyltransferase from Methylacidiphilum infernorum (isolate V4) (Methylokorus infernorum (strain V4)).